The sequence spans 196 residues: Putative NADH dehydrogenase/NAD(P)H nitroreductase PST_3601 (196 aa).

Belongs to the nitroreductase family. HadB/RutE subfamily. It depends on FMN as a cofactor.

In Stutzerimonas stutzeri (strain A1501) (Pseudomonas stutzeri), this protein is Putative NADH dehydrogenase/NAD(P)H nitroreductase PST_3601.